The chain runs to 154 residues: Cyanate hydratase (154 aa).

Residues arginine 100, glutamate 103, and serine 126 contribute to the active site.

The protein belongs to the cyanase family.

It carries out the reaction cyanate + hydrogencarbonate + 3 H(+) = NH4(+) + 2 CO2. In terms of biological role, catalyzes the reaction of cyanate with bicarbonate to produce ammonia and carbon dioxide. The sequence is that of Cyanate hydratase from Aspergillus fumigatus (strain ATCC MYA-4609 / CBS 101355 / FGSC A1100 / Af293) (Neosartorya fumigata).